Here is a 166-residue protein sequence, read N- to C-terminus: NADH-quinone oxidoreductase subunit I (166 aa).

4Fe-4S ferredoxin-type domains are found at residues Leu-57–Glu-87 and Thr-97–Ile-126. 8 residues coordinate [4Fe-4S] cluster: Cys-67, Cys-70, Cys-73, Cys-77, Cys-106, Cys-109, Cys-112, and Cys-116.

It belongs to the complex I 23 kDa subunit family. In terms of assembly, NDH-1 is composed of 14 different subunits. Subunits NuoA, H, J, K, L, M, N constitute the membrane sector of the complex. It depends on [4Fe-4S] cluster as a cofactor.

Its subcellular location is the cell inner membrane. It carries out the reaction a quinone + NADH + 5 H(+)(in) = a quinol + NAD(+) + 4 H(+)(out). Functionally, NDH-1 shuttles electrons from NADH, via FMN and iron-sulfur (Fe-S) centers, to quinones in the respiratory chain. The immediate electron acceptor for the enzyme in this species is believed to be ubiquinone. Couples the redox reaction to proton translocation (for every two electrons transferred, four hydrogen ions are translocated across the cytoplasmic membrane), and thus conserves the redox energy in a proton gradient. The sequence is that of NADH-quinone oxidoreductase subunit I from Legionella pneumophila (strain Paris).